The chain runs to 239 residues: Ribosomal RNA small subunit methyltransferase G (239 aa).

S-adenosyl-L-methionine is bound by residues Gly-76, Phe-81, 99–101 (DSS), 128–129 (IE), and Arg-147.

It belongs to the methyltransferase superfamily. RNA methyltransferase RsmG family.

The protein resides in the cytoplasm. In terms of biological role, specifically methylates the N7 position of a guanine in 16S rRNA. The sequence is that of Ribosomal RNA small subunit methyltransferase G from Prochlorococcus marinus subsp. pastoris (strain CCMP1986 / NIES-2087 / MED4).